We begin with the raw amino-acid sequence, 173 residues long: Small ribosomal subunit protein uS13 (173 aa).

Positions G130–R143 are enriched in basic residues. The segment at G130–G155 is disordered.

This sequence belongs to the universal ribosomal protein uS13 family. Part of the 30S ribosomal subunit. Forms a loose heterodimer with protein S19. Forms two bridges to the 50S subunit in the 70S ribosome.

Located at the top of the head of the 30S subunit, it contacts several helices of the 16S rRNA. In the 70S ribosome it contacts the 23S rRNA (bridge B1a) and protein L5 of the 50S subunit (bridge B1b), connecting the 2 subunits; these bridges are implicated in subunit movement. The chain is Small ribosomal subunit protein uS13 from Haloquadratum walsbyi (strain DSM 16790 / HBSQ001).